A 421-amino-acid chain; its full sequence is Mitochondrial tRNA-specific 2-thiouridylase 1 (421 aa).

Residues alanine 10–serine 17 and methionine 36 contribute to the ATP site. The segment at asparagine 96–aspartate 98 is interaction with target base in tRNA. The active-site Nucleophile is cysteine 101. A disulfide bridge connects residues cysteine 101 and cysteine 222. Glycine 126 lines the ATP pocket. Residues lysine 171–glutamine 173 form an interaction with tRNA region. Residue cysteine 222 is the Cysteine persulfide intermediate of the active site. The interval arginine 334–histidine 335 is interaction with tRNA. Residues lysine 395 to leucine 421 are disordered.

This sequence belongs to the MnmA/TRMU family. In terms of tissue distribution, ubiquitous. Abundantly expressed in tissues with high metabolic rates including heart, liver, kidney, and brain.

It localises to the mitochondrion. It carries out the reaction 5-taurinomethyluridine(34) in tRNA + S-sulfanyl-L-cysteinyl-[protein] + AH2 + ATP = 5-taurinomethyl-2-thiouridine(34) in tRNA + L-cysteinyl-[protein] + A + AMP + diphosphate + H(+). In terms of biological role, catalyzes the 2-thiolation of uridine at the wobble position (U34) of mitochondrial tRNA(Lys), tRNA(Glu) and tRNA(Gln). Required for the formation of 5-taurinomethyl-2-thiouridine (tm5s2U) of mitochondrial tRNA(Lys), tRNA(Glu), and tRNA(Gln) at the wobble position. ATP is required to activate the C2 atom of the wobble base. The polypeptide is Mitochondrial tRNA-specific 2-thiouridylase 1 (TRMU) (Homo sapiens (Human)).